Consider the following 301-residue polypeptide: D-alanine--D-alanine ligase (301 aa).

Residues 99 to 293 enclose the ATP-grasp domain; it reads KRILAFGNVR…FEELLDTIIE (195 aa). Residue 126–181 coordinates ATP; that stretch reads IENLGYPVFIKPNNGGSSVATTLVESKEAVKDAVLEALKYDTEVMIEEYIKGDEIT. The Mg(2+) site is built by Asp-248, Glu-260, and Asn-262.

The protein belongs to the D-alanine--D-alanine ligase family. Mg(2+) serves as cofactor. It depends on Mn(2+) as a cofactor.

It localises to the cytoplasm. It catalyses the reaction 2 D-alanine + ATP = D-alanyl-D-alanine + ADP + phosphate + H(+). It functions in the pathway cell wall biogenesis; peptidoglycan biosynthesis. Cell wall formation. The protein is D-alanine--D-alanine ligase of Clostridium perfringens (strain SM101 / Type A).